Consider the following 424-residue polypeptide: tRNA(Ile)-lysidine synthase (424 aa).

26-31 (SGGIDS) contributes to the ATP binding site.

The protein belongs to the tRNA(Ile)-lysidine synthase family.

Its subcellular location is the cytoplasm. It catalyses the reaction cytidine(34) in tRNA(Ile2) + L-lysine + ATP = lysidine(34) in tRNA(Ile2) + AMP + diphosphate + H(+). Its function is as follows. Ligates lysine onto the cytidine present at position 34 of the AUA codon-specific tRNA(Ile) that contains the anticodon CAU, in an ATP-dependent manner. Cytidine is converted to lysidine, thus changing the amino acid specificity of the tRNA from methionine to isoleucine. The sequence is that of tRNA(Ile)-lysidine synthase from Streptococcus agalactiae serotype V (strain ATCC BAA-611 / 2603 V/R).